The primary structure comprises 244 residues: DNA repair protein RecO (244 aa).

The protein belongs to the RecO family.

Its function is as follows. Involved in DNA repair and RecF pathway recombination. The polypeptide is DNA repair protein RecO (Ehrlichia chaffeensis (strain ATCC CRL-10679 / Arkansas)).